Reading from the N-terminus, the 281-residue chain is Transformer-2 protein homolog alpha (281 aa).

Residues 1–116 (MSDVEENNFE…TGSRANPDPN (116 aa)) are disordered. Ser-2 bears the N-acetylserine mark. Phosphoserine is present on residues Ser-2 and Ser-14. Residue Thr-24 is modified to Phosphothreonine. Residues 51–82 (RSRSKSRSRSRRHSHRRYTRSRSHSHRRRSRS) show a composition bias toward basic residues. A phosphoserine mark is found at Ser-80, Ser-82, and Ser-84. Thr-86 carries the post-translational modification Phosphothreonine. Positions 90–108 (RRRRSRSHSPMSNRRRHTG) are enriched in basic residues. Phosphoserine occurs at positions 94 and 96. In terms of domain architecture, RRM spans 117-195 (TCLGVFGLSL…RRIRVDYSIT (79 aa)). Lys-196 participates in a covalent cross-link: Glycyl lysine isopeptide (Lys-Gly) (interchain with G-Cter in SUMO2). Positions 196 to 223 (KRAHTPTPGIYMGRPTHSGGGGGGGGGG) are linker. Residues 199 to 281 (HTPTPGIYMG…RSRSYSPRRY (83 aa)) form a disordered region. Phosphothreonine is present on residues Thr-200 and Thr-202. Residues 213–231 (SGGGGGGGGGGGGGGGGGG) show a composition bias toward gly residues. An Omega-N-methylarginine modification is found at Arg-233. Residues 233–257 (RRRDSYYDRGYDRGYDRYEDYDYRR) are compositionally biased toward basic and acidic residues. Ser-237 bears the Phosphoserine mark. Over residues 267–281 (YRSRSRSRSYSPRRY) the composition is skewed to basic residues.

The protein belongs to the splicing factor SR family. Binds to A3 enhancer proteins SRp75, SRp55, SRp40 and SRp30. Interacts with ILDR1 (via C-terminus) and ILDR2. In terms of processing, phosphorylated in the RS domains. As to expression, expressed in inner ear.

The protein resides in the nucleus. Sequence-specific RNA-binding protein which participates in the control of pre-mRNA splicing. In Mus musculus (Mouse), this protein is Transformer-2 protein homolog alpha.